The following is a 66-amino-acid chain: Large ribosomal subunit protein uL29 (66 aa).

This sequence belongs to the universal ribosomal protein uL29 family.

The sequence is that of Large ribosomal subunit protein uL29 from Borreliella afzelii (strain PKo) (Borrelia afzelii).